The following is a 324-amino-acid chain: Cysteine-rich repeat secretory protein 9 (324 aa).

The first 27 residues, 1-27 (MARIIITLTIPLFYFFFFSLLSHQTMS), serve as a signal peptide directing secretion. Gnk2-homologous domains follow at residues 29–132 (PDHI…NVSF) and 138–248 (IVPS…TSVL). Residues 251 to 286 (PPPSPSAPPPRSPPPKSSPPSSLPQTPSPPLVFTPP) form a disordered region.

This sequence belongs to the cysteine-rich repeat secretory protein family.

The protein resides in the secreted. This is Cysteine-rich repeat secretory protein 9 (CRRSP9) from Arabidopsis thaliana (Mouse-ear cress).